The sequence spans 85 residues: UPF0181 protein YPO1774/y2534/YP_1619 (85 aa).

The disordered stretch occupies residues 50–85 (QAMAIFEDHDFDEHTESDYRRDDEPDADDIEDPYEG). Over residues 55 to 72 (FEDHDFDEHTESDYRRDD) the composition is skewed to basic and acidic residues. Over residues 73–85 (EPDADDIEDPYEG) the composition is skewed to acidic residues.

This sequence belongs to the UPF0181 family.

The chain is UPF0181 protein YPO1774/y2534/YP_1619 from Yersinia pestis.